The sequence spans 401 residues: UPF0242 protein CPn_0755/CP_1117/CPj0755/CpB0783 (401 aa).

It belongs to the UPF0242 family.

This chain is UPF0242 protein CPn_0755/CP_1117/CPj0755/CpB0783, found in Chlamydia pneumoniae (Chlamydophila pneumoniae).